The primary structure comprises 506 residues: Glycerol kinase (506 aa).

ADP is bound at residue Thr12. ATP is bound by residues Thr12, Thr13, and Ser14. Thr12 is a binding site for sn-glycerol 3-phosphate. Arg16 provides a ligand contact to ADP. Residues Arg82, Glu83, Tyr134, and Asp246 each contribute to the sn-glycerol 3-phosphate site. Residues Arg82, Glu83, Tyr134, Asp246, and Gln247 each coordinate glycerol. ADP contacts are provided by Thr268 and Gly312. Thr268, Gly312, Gln316, and Gly413 together coordinate ATP. The ADP site is built by Gly413 and Asn417.

Belongs to the FGGY kinase family.

It carries out the reaction glycerol + ATP = sn-glycerol 3-phosphate + ADP + H(+). Its pathway is polyol metabolism; glycerol degradation via glycerol kinase pathway; sn-glycerol 3-phosphate from glycerol: step 1/1. With respect to regulation, inhibited by fructose 1,6-bisphosphate (FBP). Its function is as follows. Key enzyme in the regulation of glycerol uptake and metabolism. Catalyzes the phosphorylation of glycerol to yield sn-glycerol 3-phosphate. The polypeptide is Glycerol kinase (Leifsonia xyli subsp. xyli (strain CTCB07)).